The sequence spans 248 residues: 2,3-bisphosphoglycerate-dependent phosphoglycerate mutase 2 (248 aa).

Residues 8–15, 21–22, arginine 60, 87–90, lysine 98, 114–115, and 183–184 contribute to the substrate site; these read RHGESAWN, TG, EKHY, RR, and GN. Catalysis depends on histidine 9, which acts as the Tele-phosphohistidine intermediate. Catalysis depends on glutamate 87, which acts as the Proton donor/acceptor.

It belongs to the phosphoglycerate mutase family. BPG-dependent PGAM subfamily.

It catalyses the reaction (2R)-2-phosphoglycerate = (2R)-3-phosphoglycerate. It functions in the pathway carbohydrate degradation; glycolysis; pyruvate from D-glyceraldehyde 3-phosphate: step 3/5. Catalyzes the interconversion of 2-phosphoglycerate and 3-phosphoglycerate. This Bacteroides thetaiotaomicron (strain ATCC 29148 / DSM 2079 / JCM 5827 / CCUG 10774 / NCTC 10582 / VPI-5482 / E50) protein is 2,3-bisphosphoglycerate-dependent phosphoglycerate mutase 2.